The chain runs to 956 residues: Translation initiation factor IF-2 (956 aa).

Positions 68–357 are disordered; sequence APEAAAPKAP…GVSVPRGDGN (290 aa). Low complexity-rich tracts occupy residues 86 to 123, 141 to 156, 164 to 175, and 212 to 235; these read AKPA…APAV, PGNN…PRAG, PAAAPASGAGRP, and GPRP…RPAA. 2 stretches are compositionally biased toward gly residues: residues 236-257 and 276-324; these read GSGG…GGGN and RGAG…GAGR. Residues 325–334 are compositionally biased toward basic residues; sequence GKQRKSKRAK. The tr-type G domain occupies 449–620; that stretch reads ARPPVVTVMG…AVMLTADAAL (172 aa). The interval 458–465 is G1; sequence GHVDHGKT. 458–465 is a binding site for GTP; that stretch reads GHVDHGKT. The segment at 483 to 487 is G2; it reads GITQH. Positions 508–511 are G3; sequence DTPG. GTP contacts are provided by residues 508–512 and 562–565; these read DTPGH and NKID. Residues 562–565 are G4; that stretch reads NKID. The segment at 598-600 is G5; the sequence is SAR.

This sequence belongs to the TRAFAC class translation factor GTPase superfamily. Classic translation factor GTPase family. IF-2 subfamily.

It localises to the cytoplasm. Its function is as follows. One of the essential components for the initiation of protein synthesis. Protects formylmethionyl-tRNA from spontaneous hydrolysis and promotes its binding to the 30S ribosomal subunits. Also involved in the hydrolysis of GTP during the formation of the 70S ribosomal complex. The sequence is that of Translation initiation factor IF-2 from Renibacterium salmoninarum (strain ATCC 33209 / DSM 20767 / JCM 11484 / NBRC 15589 / NCIMB 2235).